A 125-amino-acid chain; its full sequence is Small ribosomal subunit protein uS12 (125 aa).

Residue aspartate 89 is modified to 3-methylthioaspartic acid.

This sequence belongs to the universal ribosomal protein uS12 family. As to quaternary structure, part of the 30S ribosomal subunit. Contacts proteins S8 and S17. May interact with IF1 in the 30S initiation complex.

In terms of biological role, with S4 and S5 plays an important role in translational accuracy. Functionally, interacts with and stabilizes bases of the 16S rRNA that are involved in tRNA selection in the A site and with the mRNA backbone. Located at the interface of the 30S and 50S subunits, it traverses the body of the 30S subunit contacting proteins on the other side and probably holding the rRNA structure together. The combined cluster of proteins S8, S12 and S17 appears to hold together the shoulder and platform of the 30S subunit. The protein is Small ribosomal subunit protein uS12 of Acidovorax sp. (strain JS42).